We begin with the raw amino-acid sequence, 330 residues long: MEHLGPHHLHPGHAEPISFGIDQILNSPDQGGCMGPASRLQDGEYGLGCLVGGAYTYGGGGSAAATGAGGAGAYGTGGPGGPGGPAGGGGACSMGPLTGSYNVNMALAGGPGPGGGGGSSGGAGALSAAGVIRVPAHRPLAGAVAHPQPLATGLPTVPSVPAMPGVNNLTGLTFPWMESNRRYTKDRFTGHPYQNRTPPKKKKPRTSFTRLQICELEKRFHRQKYLASAERAALAKALKMTDAQVKTWFQNRRTKWRRQTAEEREAERQQANRILLQLQQEAFQKSLAQPLPADPLCVHNSSLFALQNLQPWSDDSTKITSVTSVASACE.

Residues 186-207 (DRFTGHPYQNRTPPKKKKPRTS) form a disordered region. The segment at residues 201-260 (KKKPRTSFTRLQICELEKRFHRQKYLASAERAALAKALKMTDAQVKTWFQNRRTKWRRQT) is a DNA-binding region (homeobox). Position 236 is an N6-acetyllysine (Lys236).

Interacts with MEIS1, MEIS2, PBX1, PBX2 and PBX3.

The protein localises to the nucleus. In terms of biological role, controls the genesis of the spleen. Binds to the DNA sequence 5'-GGCGGTAAGTGG-3'. In Homo sapiens (Human), this protein is T-cell leukemia homeobox protein 1 (TLX1).